Consider the following 209-residue polypeptide: Large ribosomal subunit protein uL3 (209 aa).

A disordered region spans residues 119-145 (AIKRHGQSRGPMSHGSHFHRAPGSVGM).

It belongs to the universal ribosomal protein uL3 family. As to quaternary structure, part of the 50S ribosomal subunit. Forms a cluster with proteins L14 and L19.

Its function is as follows. One of the primary rRNA binding proteins, it binds directly near the 3'-end of the 23S rRNA, where it nucleates assembly of the 50S subunit. The polypeptide is Large ribosomal subunit protein uL3 (Staphylococcus aureus (strain COL)).